Here is a 179-residue protein sequence, read N- to C-terminus: Large ribosomal subunit protein uL6 (179 aa).

The protein belongs to the universal ribosomal protein uL6 family. In terms of assembly, part of the 50S ribosomal subunit.

Functionally, this protein binds to the 23S rRNA, and is important in its secondary structure. It is located near the subunit interface in the base of the L7/L12 stalk, and near the tRNA binding site of the peptidyltransferase center. This Prochlorococcus marinus (strain MIT 9211) protein is Large ribosomal subunit protein uL6.